The chain runs to 303 residues: 4-sulfomuconolactone hydrolase (303 aa).

Belongs to the metallo-dependent hydrolases superfamily. Sulfomuconolactone hydrolase family. In terms of assembly, monomer. It depends on Zn(2+) as a cofactor.

It carries out the reaction 4-sulfomuconolactone + H2O = maleylacetate + sulfite + 2 H(+). With respect to regulation, completely inhibited by ZnCl(2) and CuCl(2). Its function is as follows. Involved in the degradation of 4-sulfocatechol which is a central intermediate in the degradation of substituted sulfonated benzenes. Catalyzes the hydrolytical desulfonation of 4-sulfomuconolactone to yield maleylacetate. This Hydrogenophaga intermedia protein is 4-sulfomuconolactone hydrolase.